Consider the following 362-residue polypeptide: Adenosine deaminase (362 aa).

2 residues coordinate Zn(2+): His-19 and His-21. Substrate contacts are provided by His-21, Asp-23, and Gly-181. His-208 is a binding site for Zn(2+). Glu-211 acts as the Proton donor in catalysis. Asp-300 provides a ligand contact to Zn(2+).

Belongs to the metallo-dependent hydrolases superfamily. Adenosine and AMP deaminases family. Adenosine deaminase subfamily. It depends on Zn(2+) as a cofactor.

The catalysed reaction is adenosine + H2O + H(+) = inosine + NH4(+). It carries out the reaction 2'-deoxyadenosine + H2O + H(+) = 2'-deoxyinosine + NH4(+). In terms of biological role, catalyzes the hydrolytic deamination of adenosine and 2-deoxyadenosine. This chain is Adenosine deaminase, found in Mycobacterium ulcerans (strain Agy99).